Reading from the N-terminus, the 487-residue chain is NADH-quinone oxidoreductase subunit N (487 aa).

The next 14 helical transmembrane spans lie at 12-32, 40-60, 79-99, 104-124, 129-149, 164-184, 201-221, 248-268, 281-301, 310-330, 332-352, 378-398, 411-431, and 455-475; these read VLILPEILIALGIMALLLIGV, LTVTGLTIALLFATIILIVLF, YMKILTLIGALFSLILSVGFS, FDIFEFPILVLLATLGMMLMI, MLSLYMGLELQSLALYVLAAI, FVLGALSSGLLLYGISLLYGF, ILHLGVIFGIVFILAGLAFKI, APKIAAMALIIRVIVFAFIPL, ILIFMAISSMALGAFAAIGQT, SSIGHMGYALVGLAAGNILGV, GILIYMTIYLGMTIGSFAFIL, AIVMTIQLFSLASIPPMAGFF, GLVPLAIVGMVLSVIGAFYYL, and LCLCLSALFVLFYVFFGFWFS.

Belongs to the complex I subunit 2 family. In terms of assembly, NDH-1 is composed of 14 different subunits. Subunits NuoA, H, J, K, L, M, N constitute the membrane sector of the complex.

Its subcellular location is the cell inner membrane. The enzyme catalyses a quinone + NADH + 5 H(+)(in) = a quinol + NAD(+) + 4 H(+)(out). Functionally, NDH-1 shuttles electrons from NADH, via FMN and iron-sulfur (Fe-S) centers, to quinones in the respiratory chain. The immediate electron acceptor for the enzyme in this species is believed to be ubiquinone. Couples the redox reaction to proton translocation (for every two electrons transferred, four hydrogen ions are translocated across the cytoplasmic membrane), and thus conserves the redox energy in a proton gradient. This Bartonella bacilliformis (strain ATCC 35685 / KC583 / Herrer 020/F12,63) protein is NADH-quinone oxidoreductase subunit N.